The following is a 189-amino-acid chain: Selenoprotein S (189 aa).

A helical membrane pass occupies residues 29–49 (VVLSSYGWYILLGCILIYLLI). A compositionally biased stretch (basic and acidic residues) spans 114–125 (IETWDRMKEGKS). Residues 114-189 (IETWDRMKEG…RRGPSSGGUG (76 aa)) form a disordered region. Residues 136 to 147 (PSPSTSTSAATK) show a composition bias toward low complexity. A compositionally biased stretch (basic and acidic residues) spans 148 to 157 (PKQEKQERKT). Sec-188 is a non-standard amino acid (selenocysteine).

This sequence belongs to the selenoprotein S family.

It localises to the endoplasmic reticulum membrane. The protein localises to the cytoplasm. Its function is as follows. Involved in the degradation process of misfolded endoplasmic reticulum (ER) luminal proteins. Participates in the transfer of misfolded proteins from the ER to the cytosol, where they are destroyed by the proteasome in a ubiquitin-dependent manner. This Xenopus tropicalis (Western clawed frog) protein is Selenoprotein S (vimp).